A 100-amino-acid polypeptide reads, in one-letter code: Small ribosomal subunit protein uS14c (100 aa).

The protein belongs to the universal ribosomal protein uS14 family. Part of the 30S ribosomal subunit.

It is found in the plastid. The protein localises to the chloroplast. Binds 16S rRNA, required for the assembly of 30S particles. The polypeptide is Small ribosomal subunit protein uS14c (Crucihimalaya wallichii (Rock-cress)).